A 300-amino-acid chain; its full sequence is Ribosomal protein L11 methyltransferase (300 aa).

S-adenosyl-L-methionine is bound by residues Thr147, Gly168, Asp190, and Asn236.

This sequence belongs to the methyltransferase superfamily. PrmA family.

The protein localises to the cytoplasm. The catalysed reaction is L-lysyl-[protein] + 3 S-adenosyl-L-methionine = N(6),N(6),N(6)-trimethyl-L-lysyl-[protein] + 3 S-adenosyl-L-homocysteine + 3 H(+). Functionally, methylates ribosomal protein L11. The protein is Ribosomal protein L11 methyltransferase of Leptospira interrogans serogroup Icterohaemorrhagiae serovar Lai (strain 56601).